The sequence spans 403 residues: Argininosuccinate synthase (403 aa).

Residues 13–21 (AYSGGLDTS) and A40 contribute to the ATP site. Residues Y92 and S97 each coordinate L-citrulline. Residue G122 participates in ATP binding. The L-aspartate site is built by T124, N128, and D129. Residue N128 coordinates L-citrulline. L-citrulline-binding residues include R132, S181, S190, E266, and Y278.

The protein belongs to the argininosuccinate synthase family. Type 1 subfamily. Homotetramer.

The protein resides in the cytoplasm. It carries out the reaction L-citrulline + L-aspartate + ATP = 2-(N(omega)-L-arginino)succinate + AMP + diphosphate + H(+). The protein operates within amino-acid biosynthesis; L-arginine biosynthesis; L-arginine from L-ornithine and carbamoyl phosphate: step 2/3. The polypeptide is Argininosuccinate synthase (Aliivibrio fischeri (strain ATCC 700601 / ES114) (Vibrio fischeri)).